We begin with the raw amino-acid sequence, 183 residues long: MPLSVEQALANFSQRYVEAWKAQHDCLPINEELVGLASPCIEETRDLEISWQPIVRDEAIRLHNIEQGIELDLHDDFHAFYGTQYSADMTAKFEDMNIELLQVWSDEDLERLQGNMLGHLVMQRRLKLVPTLFVAVTDDEMEVVSICNQSGEVILDRVGTKNRTVLAANMAEFLNKLEPVIAA.

This sequence belongs to the Syd family.

Its subcellular location is the cell inner membrane. Interacts with the SecY protein in vivo. May bind preferentially to an uncomplexed state of SecY, thus functioning either as a chelating agent for excess SecY in the cell or as a regulatory factor that negatively controls the translocase function. This is Protein Syd from Aliivibrio fischeri (strain ATCC 700601 / ES114) (Vibrio fischeri).